A 524-amino-acid polypeptide reads, in one-letter code: MTPVTPAAFEKRDNVVIFDTTMRDGEQSPGASMSHDEKLELAKILEEMGVDVIEAGFPIASNGDFEAVREIAKIVKNSTIAGLCRAHQVDIDRCAEALKGTQRGRIHVVIATSDLHMKHKLQMEPDAVIDVIARSVTHARNLRDDVEWSAEDATRSDRQFLRRAIETAIKAGATTINLPDTVGYTYPSEYADLFSWMTQNVEGADKVIFSTHCHNDLGLAVANSLAGVQGGARQIECAINGLGERAGNAALEEVVMALKVRGDKLPYETKIDTTHITRASRYVSAITGFPVQYNKAIVGKNAFAHESGIHQDGMLKNRETYEIMTPESVGQAPSSLVMGKHSGSHAFRAKLKDLGYELGQNALKEAFGRFKDLADRKKHVYDDDIIALVDDALARGSERIRVQRLRVVAGTDGQSAELTLEVDGEVKTSEASGDGPVDAVFNAIQQIVPHDAALRLFQVHAVTEGTDAQAQVSVRLEEDGRIATGQAADTDTLTASAKAYVNALNNLMARKEKSRPEAAIASGF.

A Pyruvate carboxyltransferase domain is found at 15 to 277 (VVIFDTTMRD…ETKIDTTHIT (263 aa)). Positions 24, 212, 214, and 248 each coordinate Mn(2+). The interval 401–524 (RVQRLRVVAG…RPEAAIASGF (124 aa)) is regulatory domain.

This sequence belongs to the alpha-IPM synthase/homocitrate synthase family. LeuA type 1 subfamily. In terms of assembly, homodimer. Requires Mn(2+) as cofactor.

It localises to the cytoplasm. The enzyme catalyses 3-methyl-2-oxobutanoate + acetyl-CoA + H2O = (2S)-2-isopropylmalate + CoA + H(+). Its pathway is amino-acid biosynthesis; L-leucine biosynthesis; L-leucine from 3-methyl-2-oxobutanoate: step 1/4. Its function is as follows. Catalyzes the condensation of the acetyl group of acetyl-CoA with 3-methyl-2-oxobutanoate (2-ketoisovalerate) to form 3-carboxy-3-hydroxy-4-methylpentanoate (2-isopropylmalate). The chain is 2-isopropylmalate synthase from Caulobacter sp. (strain K31).